Reading from the N-terminus, the 292-residue chain is ATP synthase gamma chain (292 aa).

The protein belongs to the ATPase gamma chain family. In terms of assembly, F-type ATPases have 2 components, CF(1) - the catalytic core - and CF(0) - the membrane proton channel. CF(1) has five subunits: alpha(3), beta(3), gamma(1), delta(1), epsilon(1). CF(0) has three main subunits: a, b and c.

It localises to the cell inner membrane. Its function is as follows. Produces ATP from ADP in the presence of a proton gradient across the membrane. The gamma chain is believed to be important in regulating ATPase activity and the flow of protons through the CF(0) complex. This Syntrophobacter fumaroxidans (strain DSM 10017 / MPOB) protein is ATP synthase gamma chain.